The primary structure comprises 333 residues: L-lactate dehydrogenase B chain (333 aa).

Residues 29 to 57 (GQVG…LEDK) and R99 each bind NAD(+). Substrate is bound by residues R106, N138, and R169. N138 contributes to the NAD(+) binding site. H193 serves as the catalytic Proton acceptor. Substrate is bound at residue T248.

This sequence belongs to the LDH/MDH superfamily. LDH family. Homotetramer.

It localises to the cytoplasm. It carries out the reaction (S)-lactate + NAD(+) = pyruvate + NADH + H(+). It functions in the pathway fermentation; pyruvate fermentation to lactate; (S)-lactate from pyruvate: step 1/1. In terms of biological role, interconverts simultaneously and stereospecifically pyruvate and lactate with concomitant interconversion of NADH and NAD(+). In Pelodiscus sinensis japonicus (Chinese soft-shelled turtle), this protein is L-lactate dehydrogenase B chain (LDHB).